Consider the following 64-residue polypeptide: Basic secretory protease (64 aa).

A divalent metal cation serves as cofactor. In terms of processing, glycosylated.

With respect to regulation, inhibited by EDTA. Metalloprotease, digests gelatin and azocasein (in vitro). This Boswellia serrata (Indian frankincense) protein is Basic secretory protease.